The chain runs to 1065 residues: Outer capsid protein VP3 (1065 aa).

The protein resides in the virion. The enzyme catalyses a 5'-end diphospho-ribonucleoside in mRNA + GTP + H(+) = a 5'-end (5'-triphosphoguanosine)-ribonucleoside in mRNA + diphosphate. The catalysed reaction is a 5'-end (5'-triphosphoguanosine)-ribonucleoside in mRNA + S-adenosyl-L-methionine = a 5'-end (N(7)-methyl 5'-triphosphoguanosine)-ribonucleoside in mRNA + S-adenosyl-L-homocysteine. Outer capsid protein involved in mRNA capping. Catalyzes the last 3 enzymatic activities for formation of the 5' cap structure on the viral plus-strand transcripts, namely the RNA guanylyltransferase, RNA-7N- and RNA-2'O-methyltransferase activities. The polypeptide is Outer capsid protein VP3 (S3) (Cryphonectria parasitica mycoreovirus 1 (strain 9B21) (CpMYRV-1)).